The following is a 347-amino-acid chain: Chlorophyllase type 0 (347 aa).

Residues 1-19 (MAKLLLLIFGVFIFVNSQA) form the signal peptide. Positions 20–30 (QTFPTILEKHN) are excised as a propeptide. The GXSXG signature appears at 160 to 164 (GHSRG). Serine 162 (nucleophile) is an active-site residue. Aspartate 191 acts as the Charge relay system in catalysis. Residues asparagine 215, asparagine 229, and asparagine 251 are each glycosylated (N-linked (GlcNAc...) asparagine). Histidine 262 acts as the Charge relay system in catalysis. Asparagine 321 carries an N-linked (GlcNAc...) asparagine glycan.

The protein belongs to the AB hydrolase superfamily. Lipase family.

It carries out the reaction a chlorophyll + H2O = a chlorophyllide + phytol + H(+). It catalyses the reaction chlorophyll a + H2O = phytol + chlorophyllide a + H(+). The protein operates within porphyrin-containing compound metabolism; chlorophyll degradation. Inhibited by diisopropyl fluorophosphate (DFP), phenylmethanesulfonyl fluoride (PMSF) or p-chloromercuribenzoic acid (PCMB), but not by N-ethylmaleimide (NEM) or iodoacetamide. Functionally, catalyzes the hydrolysis of ester bond in chlorophyll to yield chlorophyllide and phytol. The protein is Chlorophyllase type 0 of Chenopodium album (Fat hen).